The sequence spans 507 residues: MEEPAAPSEAHEAAGAQAGAEAAREGVSGPDLPVCEPSGESAAPDSALPHAARGWAPFPVAPVPAHLRRGGLRPAPASGGGAWPSPLPSRSSGIWTKQIICRYYIHGQCKEGENCRYSHDLSGRKMATEGGVSPPGASAGGGPSTAAHIEPPTQEVAEAPPAASSLSLPVIGSAAERGFFEAERDNADRGAAGGAGVESWADAIEFVPGQPYRGRWVASAPEAPLQSSETERKQMAVGSGLRFCYYASRGVCFRGESCMYLHGDICDMCGLQTLHPMDAAQREEHMRACIEAHEKDMELSFAVQRGMDKVCGICMEVVYEKANPNDRRFGILSNCNHSFCIRCIRRWRSARQFENRIVKSCPQCRVTSELVIPSEFWVEEEEEKQKLIQQYKEAMSNKACRYFAEGRGNCPFGDTCFYKHEYPEGWGDEPPGPGGGSFSAYWHQLVEPVRMGEGNMLYKSIKKELVVLRLASLLFKRFLSLRDELPFSEDQWDLLHYELEEYFNLIL.

Over residues 1–21 (MEEPAAPSEAHEAAGAQAGAE) the composition is skewed to low complexity. Disordered regions lie at residues 1–48 (MEEP…DSAL) and 69–89 (RGGL…PLPS). The C3H1-type 1 zinc finger occupies 95–122 (WTKQIICRYYIHGQCKEGENCRYSHDLS). Positions 126-149 (MATEGGVSPPGASAGGGPSTAAHI) are disordered. The C3H1-type 2 zinc finger occupies 238–265 (GSGLRFCYYASRGVCFRGESCMYLHGDI). Positions 266 to 293 (CDMCGLQTLHPMDAAQREEHMRACIEAH) are makorin-type Cys-His. An RING-type zinc finger spans residues 311-365 (CGICMEVVYEKANPNDRRFGILSNCNHSFCIRCIRRWRSARQFENRIVKSCPQCR). A C3H1-type 3 zinc finger spans residues 394 to 423 (AMSNKACRYFAEGRGNCPFGDTCFYKHEYP).

In terms of tissue distribution, ubiquitous.

The protein resides in the nucleus. It carries out the reaction S-ubiquitinyl-[E2 ubiquitin-conjugating enzyme]-L-cysteine + [acceptor protein]-L-lysine = [E2 ubiquitin-conjugating enzyme]-L-cysteine + N(6)-ubiquitinyl-[acceptor protein]-L-lysine.. It participates in protein modification; protein ubiquitination. In terms of biological role, E3 ubiquitin ligase catalyzing the covalent attachment of ubiquitin moieties onto substrate proteins. Acts as a key developmental timer that helps ensure puberty begins at the appropriate age, by inhibiting premature activation of the reproductive hormone cascade. Epigenetically regulates GNRH1 transcription by disrupting the binding of methyl-DNA binding protein 3/MBD3 to the promoter of GNRH1. Mechanistically, mediates the non-proteolytic ubiquitination of MBD3 at multiple sites with 'Lys27' ubiquitin linkages and thereby regulates the methylation status of the genome, including GNRH1 promoter. Modulates the stability and translation of GNRH1 mRNA by mediating the non-proteolytic ubiquitination of PABP family members PABPC1, PABPC3 and PABPC4 at multiple sites. Also participates in the maintenance of genomic and epigenomic stability by regulating the abundance of APEX2 via 'Lys-48'-linked ubiquitination. The sequence is that of E3 ubiquitin-protein ligase makorin-3 (MKRN3) from Homo sapiens (Human).